The chain runs to 226 residues: MISLKIYFVLIFLFLKGINSAYVSNEEGETVDFTFSGFYANLTYPNEISELNYVEGNYLSTRIVRFNGSFYCDTTILSETNNVTGSCYVANCANDTVLEICDSGKEVHFTDMSGTTWSADTFTENLYWFCGGDGNKPNMTTAAAMNSDIDSYYVYGNWTIDTADSTVADYTCNYTHFQEAGDIEKGDVYTASADSSDSSSASSTIFKPSYFISCLLSVGLYLVLNF.

The signal sequence occupies residues 1–20 (MISLKIYFVLIFLFLKGINS). A heme binding region spans residues 72–101 (CDTTILSETNNVTGSCYVANCANDTVLEIC). The GPI-anchor amidated serine moiety is linked to residue serine 199. Positions 200 to 226 (SASSTIFKPSYFISCLLSVGLYLVLNF) are cleaved as a propeptide — removed in mature form.

The protein resides in the cell membrane. Its subcellular location is the vacuole membrane. High affinity heme transporter involved in the assimilation of exogenous heme during conditions of low cellular iron. The chain is High affinity heme transporter from Schizosaccharomyces pombe (strain 972 / ATCC 24843) (Fission yeast).